The chain runs to 362 residues: Chalcone synthase A (362 aa).

Residue Cys168 is part of the active site.

This sequence belongs to the thiolase-like superfamily. Chalcone/stilbene synthases family.

The catalysed reaction is (E)-4-coumaroyl-CoA + 3 malonyl-CoA + 3 H(+) = 2',4,4',6'-tetrahydroxychalcone + 3 CO2 + 4 CoA. The protein operates within secondary metabolite biosynthesis; flavonoid biosynthesis. Functionally, the primary product of this enzyme is 4,2',4',6'-tetrahydroxychalcone (also termed naringenin-chalcone or chalcone) which can under specific conditions spontaneously isomerize into naringenin. This is Chalcone synthase A (CHSA) from Ipomoea triloba (Trilobed morning glory).